The chain runs to 627 residues: Translation factor GUF1, mitochondrial (627 aa).

The transit peptide at 1–16 (MSLAWSAGRAWSRQSY) directs the protein to the mitochondrion. The tr-type G domain occupies 40–221 (ERYRNFCIVA…AVIERIPHPV (182 aa)). GTP is bound by residues 49–56 (AHIDHGKS), 114–118 (DTPGH), and 168–171 (NKID).

This sequence belongs to the TRAFAC class translation factor GTPase superfamily. Classic translation factor GTPase family. LepA subfamily.

It localises to the mitochondrion inner membrane. It carries out the reaction GTP + H2O = GDP + phosphate + H(+). In terms of biological role, promotes mitochondrial protein synthesis. May act as a fidelity factor of the translation reaction, by catalyzing a one-codon backward translocation of tRNAs on improperly translocated ribosomes. Binds to mitochondrial ribosomes in a GTP-dependent manner. This chain is Translation factor GUF1, mitochondrial, found in Fusarium vanettenii (strain ATCC MYA-4622 / CBS 123669 / FGSC 9596 / NRRL 45880 / 77-13-4) (Fusarium solani subsp. pisi).